The following is a 158-amino-acid chain: SUMO-conjugating enzyme UBC9 (158 aa).

The UBC core domain occupies 4-157 (IALSRLAQER…VRAQAKKFAP (154 aa)). The tract at residues 13 to 18 (RKAWRK) is interaction with SUMO1. Residue C93 is the Glycyl thioester intermediate of the active site.

It belongs to the ubiquitin-conjugating enzyme family. As to quaternary structure, interacts with SOX9.

Its subcellular location is the nucleus. It is found in the cytoplasm. Its pathway is protein modification; protein sumoylation. Functionally, accepts the ubiquitin-like proteins SUMO1, SUMO2 and SUMO3 from the UBLE1A-UBLE1B E1 complex and catalyzes their covalent attachment to other proteins with the help of an E3 ligase such as RANBP2 or CBX4. Essential for nuclear architecture and chromosome segregation. In Gallus gallus (Chicken), this protein is SUMO-conjugating enzyme UBC9 (UBE2I).